Here is a 407-residue protein sequence, read N- to C-terminus: Imidazolonepropionase (407 aa).

The Fe(3+) site is built by His-68 and His-70. Positions 68 and 70 each coordinate Zn(2+). 4-imidazolone-5-propanoate contacts are provided by Arg-77, Tyr-140, and His-173. Tyr-140 serves as a coordination point for N-formimidoyl-L-glutamate. Fe(3+) is bound at residue His-236. Residue His-236 participates in Zn(2+) binding. Gln-239 contributes to the 4-imidazolone-5-propanoate binding site. Position 311 (Asp-311) interacts with Fe(3+). Asp-311 contacts Zn(2+). Residues Asn-313 and Gly-315 each coordinate N-formimidoyl-L-glutamate. A 4-imidazolone-5-propanoate-binding site is contributed by Thr-316.

Belongs to the metallo-dependent hydrolases superfamily. HutI family. Zn(2+) is required as a cofactor. Fe(3+) serves as cofactor.

The protein localises to the cytoplasm. It carries out the reaction 4-imidazolone-5-propanoate + H2O = N-formimidoyl-L-glutamate. Its pathway is amino-acid degradation; L-histidine degradation into L-glutamate; N-formimidoyl-L-glutamate from L-histidine: step 3/3. Its function is as follows. Catalyzes the hydrolytic cleavage of the carbon-nitrogen bond in imidazolone-5-propanoate to yield N-formimidoyl-L-glutamate. It is the third step in the universal histidine degradation pathway. In Stenotrophomonas maltophilia (strain R551-3), this protein is Imidazolonepropionase.